The chain runs to 450 residues: D-inositol 3-phosphate glycosyltransferase (450 aa).

A 1D-myo-inositol 3-phosphate-binding site is contributed by histidine 26. Residues 32–33 (QP) and glycine 40 each bind UDP-N-acetyl-alpha-D-glucosamine. Residues 37 to 42 (DAGGMN), lysine 95, tyrosine 128, threonine 152, and arginine 172 each bind 1D-myo-inositol 3-phosphate. UDP-N-acetyl-alpha-D-glucosamine is bound by residues arginine 246, lysine 251, and glutamine 313. Positions 322, 323, and 325 each coordinate Mg(2+). UDP-N-acetyl-alpha-D-glucosamine contacts are provided by glutamate 335 and glutamate 343. Mg(2+) is bound at residue threonine 349.

Belongs to the glycosyltransferase group 1 family. MshA subfamily. As to quaternary structure, homodimer.

The enzyme catalyses 1D-myo-inositol 3-phosphate + UDP-N-acetyl-alpha-D-glucosamine = 1D-myo-inositol 2-acetamido-2-deoxy-alpha-D-glucopyranoside 3-phosphate + UDP + H(+). In terms of biological role, catalyzes the transfer of a N-acetyl-glucosamine moiety to 1D-myo-inositol 3-phosphate to produce 1D-myo-inositol 2-acetamido-2-deoxy-glucopyranoside 3-phosphate in the mycothiol biosynthesis pathway. The chain is D-inositol 3-phosphate glycosyltransferase from Mycolicibacterium vanbaalenii (strain DSM 7251 / JCM 13017 / BCRC 16820 / KCTC 9966 / NRRL B-24157 / PYR-1) (Mycobacterium vanbaalenii).